We begin with the raw amino-acid sequence, 217 residues long: Protein-L-isoaspartate O-methyltransferase 2 (217 aa).

Ser64 is a catalytic residue.

The protein belongs to the methyltransferase superfamily. L-isoaspartyl/D-aspartyl protein methyltransferase family.

It is found in the cytoplasm. It carries out the reaction [protein]-L-isoaspartate + S-adenosyl-L-methionine = [protein]-L-isoaspartate alpha-methyl ester + S-adenosyl-L-homocysteine. Catalyzes the methyl esterification of L-isoaspartyl residues in peptides and proteins that result from spontaneous decomposition of normal L-aspartyl and L-asparaginyl residues. It plays a role in the repair and/or degradation of damaged proteins. The polypeptide is Protein-L-isoaspartate O-methyltransferase 2 (Rhodopseudomonas palustris (strain HaA2)).